Here is a 289-residue protein sequence, read N- to C-terminus: D-alanine aminotransferase (289 aa).

Residue Tyr-31 participates in substrate binding. Arg-50 is a pyridoxal 5'-phosphate binding site. Substrate is bound by residues Arg-99 and His-101. Lys-147 carries the N6-(pyridoxal phosphate)lysine modification. Glu-179 provides a ligand contact to pyridoxal 5'-phosphate.

This sequence belongs to the class-IV pyridoxal-phosphate-dependent aminotransferase family. As to quaternary structure, homodimer. It depends on pyridoxal 5'-phosphate as a cofactor.

It catalyses the reaction D-alanine + 2-oxoglutarate = D-glutamate + pyruvate. Functionally, acts on the D-isomers of alanine, leucine, aspartate, glutamate, aminobutyrate, norvaline and asparagine. The enzyme transfers an amino group from a substrate D-amino acid to the pyridoxal phosphate cofactor to form pyridoxamine and an alpha-keto acid in the first half-reaction. The second half-reaction is the reverse of the first, transferring the amino group from the pyridoxamine to a second alpha-keto acid to form the product D-amino acid via a ping-pong mechanism. This is an important process in the formation of D-alanine and D-glutamate, which are essential bacterial cell wall components. The sequence is that of D-alanine aminotransferase (dat) from Listeria monocytogenes serovar 1/2a (strain ATCC BAA-679 / EGD-e).